The chain runs to 233 residues: Orotidine 5'-phosphate decarboxylase (233 aa).

Substrate-binding positions include aspartate 11, lysine 34, 61–70 (DLKLHDIPNT), threonine 117, arginine 179, glutamine 188, glycine 208, and arginine 209. Lysine 63 acts as the Proton donor in catalysis.

Belongs to the OMP decarboxylase family. Type 1 subfamily. As to quaternary structure, homodimer.

It carries out the reaction orotidine 5'-phosphate + H(+) = UMP + CO2. The protein operates within pyrimidine metabolism; UMP biosynthesis via de novo pathway; UMP from orotate: step 2/2. In terms of biological role, catalyzes the decarboxylation of orotidine 5'-monophosphate (OMP) to uridine 5'-monophosphate (UMP). The polypeptide is Orotidine 5'-phosphate decarboxylase (Streptococcus pneumoniae (strain P1031)).